The primary structure comprises 345 residues: MERFYTCSCFFTDNIFLEEYKLHVRFVSENQFRKDYQNILRSLGCESESQFRDVIGKIQAEIERRQNHKLKSTERAAVIKEIYTPLHQHVYHLQESFLAPELLEMVKYCASSEANVQGLLKLIQTEAASRVFRFQVFRKEFCKDLLEELEHFEQSDAPKGRPNTMNNYGIVLNELGFDEGFITPLREVYLRPLTALLYSDCGGNCLDSHKAFVVKYDMHEDLNLSYHYDNSEVTLNVSLGKDFTEGNLFFGDMRQVPLSETECVEVEHRVTEGLLHRGQHMHGALSISSGTRWNLIIWMRASRQRNKLCPMCGKRPTLVESDGFSDGFTMDSDGDARANVSCSLT.

The Fe2OG dioxygenase domain occupies 207-301 (DSHKAFVVKY…RWNLIIWMRA (95 aa)). Fe cation contacts are provided by His-227, Asp-229, and His-282. Arg-292 contacts 2-oxoglutarate.

This sequence belongs to the OGFOD2 family. Fe(2+) serves as cofactor. The cofactor is L-ascorbate.

The chain is 2-oxoglutarate and iron-dependent oxygenase domain-containing protein 2 (ogfod2) from Danio rerio (Zebrafish).